We begin with the raw amino-acid sequence, 477 residues long: Histidine--tRNA ligase (477 aa).

The protein belongs to the class-II aminoacyl-tRNA synthetase family. Homodimer.

Its subcellular location is the cytoplasm. The catalysed reaction is tRNA(His) + L-histidine + ATP = L-histidyl-tRNA(His) + AMP + diphosphate + H(+). The chain is Histidine--tRNA ligase (hisS) from Xanthomonas campestris pv. campestris (strain ATCC 33913 / DSM 3586 / NCPPB 528 / LMG 568 / P 25).